We begin with the raw amino-acid sequence, 1067 residues long: FHIP family protein GL19323 (1067 aa).

The span at 1-11 (MSWLRSSPLRQ) shows a compositional bias: polar residues. Disordered stretches follow at residues 1-31 (MSWLRSSPLRQSGNGGGGGVSTGHSSTGSLR), 503-525 (LARPKSVHEQQPPSGATGEQPIQ), and 832-1013 (NENS…SEPA). Phosphoserine is present on residues Ser508 and Ser835. Residues 842–858 (QPQTTLSQQQQQQQGQQ) show a composition bias toward low complexity. The span at 859–878 (RSAYATLSAATPVQATQTSA) shows a compositional bias: polar residues. Residues 893 to 904 (SKSISSMFSRRS) are compositionally biased toward low complexity. Over residues 918–949 (LVGNNNSGSGQSQPFSSTGTGTCETSLSTNPQ) the composition is skewed to polar residues. Residues 950–979 (SGAAAARSTGTATTANGNSSNSNISIGGST) are compositionally biased toward low complexity. Polar residues predominate over residues 980-996 (QTLSGHSNTTTYSSSTL).

It belongs to the FHIP family.

The chain is FHIP family protein GL19323 from Drosophila persimilis (Fruit fly).